The chain runs to 427 residues: Enolase (427 aa).

Q163 contacts (2R)-2-phosphoglycerate. The active-site Proton donor is the E205. D242, E285, and D312 together coordinate Mg(2+). 4 residues coordinate (2R)-2-phosphoglycerate: K337, R366, S367, and K388. Residue K337 is the Proton acceptor of the active site.

It belongs to the enolase family. The cofactor is Mg(2+).

The protein localises to the cytoplasm. It localises to the secreted. The protein resides in the cell surface. The catalysed reaction is (2R)-2-phosphoglycerate = phosphoenolpyruvate + H2O. It functions in the pathway carbohydrate degradation; glycolysis; pyruvate from D-glyceraldehyde 3-phosphate: step 4/5. Catalyzes the reversible conversion of 2-phosphoglycerate (2-PG) into phosphoenolpyruvate (PEP). It is essential for the degradation of carbohydrates via glycolysis. This chain is Enolase, found in Paraburkholderia xenovorans (strain LB400).